A 137-amino-acid chain; its full sequence is Transcription antitermination protein NusB (137 aa).

This sequence belongs to the NusB family.

In terms of biological role, involved in transcription antitermination. Required for transcription of ribosomal RNA (rRNA) genes. Binds specifically to the boxA antiterminator sequence of the ribosomal RNA (rrn) operons. In Aeromonas salmonicida (strain A449), this protein is Transcription antitermination protein NusB.